Reading from the N-terminus, the 529-residue chain is Bifunctional purine biosynthesis protein PurH (529 aa).

The MGS-like domain maps to 1–148 (MNNARPIRRA…KNHKDVVIVV (148 aa)).

Belongs to the PurH family.

It carries out the reaction (6R)-10-formyltetrahydrofolate + 5-amino-1-(5-phospho-beta-D-ribosyl)imidazole-4-carboxamide = 5-formamido-1-(5-phospho-D-ribosyl)imidazole-4-carboxamide + (6S)-5,6,7,8-tetrahydrofolate. The enzyme catalyses IMP + H2O = 5-formamido-1-(5-phospho-D-ribosyl)imidazole-4-carboxamide. It participates in purine metabolism; IMP biosynthesis via de novo pathway; 5-formamido-1-(5-phospho-D-ribosyl)imidazole-4-carboxamide from 5-amino-1-(5-phospho-D-ribosyl)imidazole-4-carboxamide (10-formyl THF route): step 1/1. Its pathway is purine metabolism; IMP biosynthesis via de novo pathway; IMP from 5-formamido-1-(5-phospho-D-ribosyl)imidazole-4-carboxamide: step 1/1. In Shewanella amazonensis (strain ATCC BAA-1098 / SB2B), this protein is Bifunctional purine biosynthesis protein PurH.